Here is a 287-residue protein sequence, read N- to C-terminus: MNLQYLILSLLSTTVYGGFNLNFDSKGDALEKAAIDFTGEDVAVIKENERESFGITDGPLKDACGKVSGRRPDHVWLYKPTLWGDMYTMYKWPEVTRTLTPIAARVVGKEQKPMIVSSQVYRNRSNRTVKVNGKISQEVTNTVENKWSKTHGLSVTASMTYSFKVVEASMEIGYTSEWGQEETKSESVAVGQEMGFESELQPGESVEAVLSATKGSMIIDVTYRATLDGCCAINYNNGWKGHHYYCYPIGMVQDAGKLKKHVDVKETIKIGFYSDSHVIVRDKHGKK.

The N-terminal stretch at 1–17 is a signal peptide; sequence MNLQYLILSLLSTTVYG. His284 is subject to Histidine amide.

The protein belongs to the megalysin family. Post-translationally, contains 2 disulfide bonds. In terms of tissue distribution, expressed by the venom apparatus.

The protein localises to the secreted. The protein resides in the target cell membrane. In terms of biological role, may function as a large pore-forming protein. The sequence is that of U-megalopygitoxin(8)-Mo12 from Megalopyge opercularis (Southern flannel moth).